Reading from the N-terminus, the 256-residue chain is ATP-dependent dethiobiotin synthetase BioD (256 aa).

13–18 (EVGKTY) lines the ATP pocket. T17 lines the Mg(2+) pocket. Residue K38 is part of the active site. Substrate is bound at residue S42. ATP contacts are provided by residues D56, 118 to 121 (EGAG), and 187 to 188 (NR). Mg(2+)-binding residues include D56 and E118.

Belongs to the dethiobiotin synthetase family. In terms of assembly, homodimer. Mg(2+) is required as a cofactor.

The protein localises to the cytoplasm. It carries out the reaction (7R,8S)-7,8-diammoniononanoate + CO2 + ATP = (4R,5S)-dethiobiotin + ADP + phosphate + 3 H(+). The protein operates within cofactor biosynthesis; biotin biosynthesis; biotin from 7,8-diaminononanoate: step 1/2. Its function is as follows. Catalyzes a mechanistically unusual reaction, the ATP-dependent insertion of CO2 between the N7 and N8 nitrogen atoms of 7,8-diaminopelargonic acid (DAPA, also called 7,8-diammoniononanoate) to form a ureido ring. The polypeptide is ATP-dependent dethiobiotin synthetase BioD (Rhodopirellula baltica (strain DSM 10527 / NCIMB 13988 / SH1)).